The sequence spans 257 residues: Imidazole glycerol phosphate synthase subunit HisF (257 aa).

Active-site residues include aspartate 12 and aspartate 131.

The protein belongs to the HisA/HisF family. As to quaternary structure, heterodimer of HisH and HisF.

The protein localises to the cytoplasm. The catalysed reaction is 5-[(5-phospho-1-deoxy-D-ribulos-1-ylimino)methylamino]-1-(5-phospho-beta-D-ribosyl)imidazole-4-carboxamide + L-glutamine = D-erythro-1-(imidazol-4-yl)glycerol 3-phosphate + 5-amino-1-(5-phospho-beta-D-ribosyl)imidazole-4-carboxamide + L-glutamate + H(+). It functions in the pathway amino-acid biosynthesis; L-histidine biosynthesis; L-histidine from 5-phospho-alpha-D-ribose 1-diphosphate: step 5/9. IGPS catalyzes the conversion of PRFAR and glutamine to IGP, AICAR and glutamate. The HisF subunit catalyzes the cyclization activity that produces IGP and AICAR from PRFAR using the ammonia provided by the HisH subunit. The protein is Imidazole glycerol phosphate synthase subunit HisF of Teredinibacter turnerae (strain ATCC 39867 / T7901).